Reading from the N-terminus, the 126-residue chain is Large ribosomal subunit protein uL22 (126 aa).

Belongs to the universal ribosomal protein uL22 family. As to quaternary structure, part of the 50S ribosomal subunit.

This protein binds specifically to 23S rRNA; its binding is stimulated by other ribosomal proteins, e.g. L4, L17, and L20. It is important during the early stages of 50S assembly. It makes multiple contacts with different domains of the 23S rRNA in the assembled 50S subunit and ribosome. Its function is as follows. The globular domain of the protein is located near the polypeptide exit tunnel on the outside of the subunit, while an extended beta-hairpin is found that lines the wall of the exit tunnel in the center of the 70S ribosome. The chain is Large ribosomal subunit protein uL22 from Cereibacter sphaeroides (strain ATCC 17029 / ATH 2.4.9) (Rhodobacter sphaeroides).